The chain runs to 147 residues: Sec-independent protein translocase protein TatB (147 aa).

Residues 2 to 22 traverse the membrane as a helical segment; the sequence is FSSIGWPEIFTVLILGLIIIG. The segment at 96–147 is disordered; the sequence is FDPKKIMASGTEGEAYRERGINPQPAGDSASPQTPSNKESQPKAGFSWDDIT. Over residues 125–134 the composition is skewed to polar residues; that stretch reads ASPQTPSNKE.

The protein belongs to the TatB family. The Tat system comprises two distinct complexes: a TatABC complex, containing multiple copies of TatA, TatB and TatC subunits, and a separate TatA complex, containing only TatA subunits. Substrates initially bind to the TatABC complex, which probably triggers association of the separate TatA complex to form the active translocon.

It localises to the cell membrane. Functionally, part of the twin-arginine translocation (Tat) system that transports large folded proteins containing a characteristic twin-arginine motif in their signal peptide across membranes. Together with TatC, TatB is part of a receptor directly interacting with Tat signal peptides. TatB may form an oligomeric binding site that transiently accommodates folded Tat precursor proteins before their translocation. This is Sec-independent protein translocase protein TatB from Corynebacterium diphtheriae (strain ATCC 700971 / NCTC 13129 / Biotype gravis).